The following is a 155-amino-acid chain: MNVYNKADSFSLESDSIKDVIHDYICWLSMTDETRPSIGNVFTAMETFKIDAVRYYDGNIYDLAKDINTMSFDSFIRSLQNITSKKDKLTVYGTMGLLSIVVDINKGRDVSNIKFAAGIIILMEYIFDDTDLSHLKIALYRRIQRCYPIDDDDDR.

It belongs to the orthopoxvirus OPG029 family. Interacts with host TANK, TBKBP1 and AZI2; these interactions prevent interferon production. Interacts with host STAT2.

Functionally, prevents establishment of cellular antiviral state by blocking virus-induced phosphorylation and activation of interferon regulatory factors 3/IRF3 and 7/IRF7, transcription factors critical for the induction of interferons alpha and beta. This blockage is produced through the inhibition of host TBK1, by binding host TBK1 adapter proteins TBKBP1 and AZI2, thereby producing a strong inhibition of the phosphorylation and activation of IRF3 and IRF7. Also acts as an inhibitor of the cellular response to type I IFN by interacting with host STAT2. Mechanistically, exerts its inhibitory effect after host ISGF3 complex (composed of STAT1, STAT2 and IRF9) binding to the interferon stimulated response element (ISRE). The sequence is that of IFN signaling evasion protein OPG029 (OPG019) from Cynomys gunnisoni (Gunnison's prairie dog).